The following is a 266-amino-acid chain: Type III pantothenate kinase (266 aa).

ATP is bound at residue 9-16; it reads DAGNSRIK. Residues tyrosine 96 and 103–106 each bind substrate; that span reads GSDR. Residue aspartate 105 is the Proton acceptor of the active site. Residue threonine 129 coordinates ATP. Residue threonine 189 participates in substrate binding.

Belongs to the type III pantothenate kinase family. In terms of assembly, homodimer. It depends on NH4(+) as a cofactor. K(+) is required as a cofactor.

The protein resides in the cytoplasm. It carries out the reaction (R)-pantothenate + ATP = (R)-4'-phosphopantothenate + ADP + H(+). The protein operates within cofactor biosynthesis; coenzyme A biosynthesis; CoA from (R)-pantothenate: step 1/5. In terms of biological role, catalyzes the phosphorylation of pantothenate (Pan), the first step in CoA biosynthesis. The polypeptide is Type III pantothenate kinase (Burkholderia cenocepacia (strain ATCC BAA-245 / DSM 16553 / LMG 16656 / NCTC 13227 / J2315 / CF5610) (Burkholderia cepacia (strain J2315))).